The primary structure comprises 233 residues: Fibrillarin-like rRNA/tRNA 2'-O-methyltransferase (233 aa).

S-adenosyl-L-methionine-binding positions include 90–91 (TT), 109–110 (EF), 134–135 (DA), and 154–157 (DVAQ).

This sequence belongs to the methyltransferase superfamily. Fibrillarin family. Interacts with nop5. Component of box C/D small ribonucleoprotein (sRNP) particles that contain rpl7ae, FlpA and nop5, plus a guide RNA.

Its function is as follows. Involved in pre-rRNA and tRNA processing. Utilizes the methyl donor S-adenosyl-L-methionine to catalyze the site-specific 2'-hydroxyl methylation of ribose moieties in rRNA and tRNA. Site specificity is provided by a guide RNA that base pairs with the substrate. Methylation occurs at a characteristic distance from the sequence involved in base pairing with the guide RNA. This is Fibrillarin-like rRNA/tRNA 2'-O-methyltransferase from Aeropyrum pernix (strain ATCC 700893 / DSM 11879 / JCM 9820 / NBRC 100138 / K1).